Here is a 144-residue protein sequence, read N- to C-terminus: Large ribosomal subunit protein uL15 (144 aa).

A disordered region spans residues 1 to 57; sequence MFLNTLRPGEGSKHAPKRVGRGIGSGLGKTGGRGHKGLKSRSGGSVKPGFEGGQMPL. A compositionally biased stretch (gly residues) spans 21–31; the sequence is RGIGSGLGKTG.

Belongs to the universal ribosomal protein uL15 family. As to quaternary structure, part of the 50S ribosomal subunit.

Its function is as follows. Binds to the 23S rRNA. The polypeptide is Large ribosomal subunit protein uL15 (Marinomonas sp. (strain MWYL1)).